Here is a 393-residue protein sequence, read N- to C-terminus: NAD(P)H-quinone oxidoreductase subunit H, chloroplastic (393 aa).

It belongs to the complex I 49 kDa subunit family. As to quaternary structure, NDH is composed of at least 16 different subunits, 5 of which are encoded in the nucleus.

The protein resides in the plastid. It is found in the chloroplast thylakoid membrane. It catalyses the reaction a plastoquinone + NADH + (n+1) H(+)(in) = a plastoquinol + NAD(+) + n H(+)(out). The enzyme catalyses a plastoquinone + NADPH + (n+1) H(+)(in) = a plastoquinol + NADP(+) + n H(+)(out). Functionally, NDH shuttles electrons from NAD(P)H:plastoquinone, via FMN and iron-sulfur (Fe-S) centers, to quinones in the photosynthetic chain and possibly in a chloroplast respiratory chain. The immediate electron acceptor for the enzyme in this species is believed to be plastoquinone. Couples the redox reaction to proton translocation, and thus conserves the redox energy in a proton gradient. This chain is NAD(P)H-quinone oxidoreductase subunit H, chloroplastic, found in Oenothera argillicola (Appalachian evening primrose).